Here is a 153-residue protein sequence, read N- to C-terminus: Ribonuclease VapC6 (153 aa).

The region spanning 6 to 152 (VFIDSSVMVG…EKVDFIEIIK (147 aa)) is the PINc domain. Residues D9 and D120 each coordinate Mg(2+).

The protein belongs to the PINc/VapC protein family. Requires Mg(2+) as cofactor.

Functionally, toxic component of a type II toxin-antitoxin (TA) system. An RNase. The chain is Ribonuclease VapC6 from Methanocaldococcus jannaschii (strain ATCC 43067 / DSM 2661 / JAL-1 / JCM 10045 / NBRC 100440) (Methanococcus jannaschii).